The primary structure comprises 443 residues: Putative type II methyltransferase M.BsuMIIP (443 aa).

The 437-residue stretch at 4–440 (LRVMSLFSGI…QELIHTYVNK (437 aa)) folds into the SAM-dependent MTase C5-type domain. The active site involves Cys-78.

It belongs to the class I-like SAM-binding methyltransferase superfamily. C5-methyltransferase family.

The enzyme catalyses a 2'-deoxycytidine in DNA + S-adenosyl-L-methionine = a 5-methyl-2'-deoxycytidine in DNA + S-adenosyl-L-homocysteine + H(+). A putative methylase, recognizes the double-stranded sequence 5'-GGCC-3', methylates C-?. There is no known cognate restriction enzyme. The protein is Putative type II methyltransferase M.BsuMIIP (mtbP) of Bacillus subtilis (strain 168).